A 151-amino-acid polypeptide reads, in one-letter code: RNA polymerase-binding transcription factor DksA (151 aa).

The stretch at 34–54 forms a coiled coil; it reads EAQLSHFKRILEAWRNQLRDE. The Zn(2+) site is built by C114, C117, C135, and C138. The segment at 114-138 adopts a dksA C4-type zinc-finger fold; the sequence is CESCGVEIGIRRLEARPTADLCIDC.

Belongs to the DksA family. As to quaternary structure, interacts directly with the RNA polymerase.

It localises to the cytoplasm. In terms of biological role, transcription factor that acts by binding directly to the RNA polymerase (RNAP). Required for negative regulation of rRNA expression and positive regulation of several amino acid biosynthesis promoters. Also required for regulation of fis expression. In Salmonella typhi, this protein is RNA polymerase-binding transcription factor DksA.